The following is a 381-amino-acid chain: Deoxyguanosinetriphosphate triphosphohydrolase-like protein (381 aa).

The HD domain occupies 76–203 (RMTHTLEVAG…ADLSDEIAYT (128 aa)).

Belongs to the dGTPase family. Type 2 subfamily.

The protein is Deoxyguanosinetriphosphate triphosphohydrolase-like protein of Leptospira interrogans serogroup Icterohaemorrhagiae serovar copenhageni (strain Fiocruz L1-130).